The chain runs to 407 residues: uncharacterized protein (407 aa).

Over 1–290 (MPLNIIGTAL…SNSLRRVISN (290 aa)) the chain is Lumenal. NADP(+)-binding residues include D114, K236, and S281. The active-site Lowers pKa of active site Tyr is K236. The chain crosses the membrane as a helical span at residues 291–311 (GSVVLLIILYCILLYPILWLF). Topologically, residues 312-407 (TKSGRRGDQS…KSQNKSRKDD (96 aa)) are cytoplasmic. A coiled-coil region spans residues 361–390 (ELQKKLFDNTERDILQLEKKVAAKRNANKT). A disordered region spans residues 383-407 (AKRNANKTGNQNSKKKSQNKSRKDD). Positions 395–407 (SKKKSQNKSRKDD) are enriched in basic residues.

It belongs to the short-chain dehydrogenases/reductases (SDR) family.

It localises to the endoplasmic reticulum membrane. May be involved in lipid metabolism. This is an uncharacterized protein from Saccharomyces cerevisiae (strain ATCC 204508 / S288c) (Baker's yeast).